The primary structure comprises 536 residues: Serine protease inhibitor 28Dc (536 aa).

The signal sequence occupies residues 1-16 (MWRLLLALLLVSSVCC). The N-linked (GlcNAc...) asparagine glycan is linked to N355.

This sequence belongs to the serpin family.

It localises to the secreted. Its function is as follows. Serine protease inhibitor which is required for pupal viability and plays an essential role in regulating the melanization reaction. Inhibits spontaneous melanization and appears to be involved in the melanization immune response to physical wounding in larvae and adults. Acts by negatively regulating the Hayan-phenoloxidase (PPO1) cascade in the hemolymph and possibly the trachea. May function by controlling the initial release of the activated form of PPO1, phenoloxidase (PO) and thus maintains PO availability for processes such as wound response and pigmentation. The chain is Serine protease inhibitor 28Dc from Drosophila melanogaster (Fruit fly).